Consider the following 95-residue polypeptide: MSVDLATVKRVAKLARIAVSEDEANRMVGELNGILGFVEQLSEVNVEGVEAMTSVTPMAMKKRADAVTDGNKAADIVANAPVTDHNFFLVPKVVE.

Belongs to the GatC family. Heterotrimer of A, B and C subunits.

It carries out the reaction L-glutamyl-tRNA(Gln) + L-glutamine + ATP + H2O = L-glutaminyl-tRNA(Gln) + L-glutamate + ADP + phosphate + H(+). It catalyses the reaction L-aspartyl-tRNA(Asn) + L-glutamine + ATP + H2O = L-asparaginyl-tRNA(Asn) + L-glutamate + ADP + phosphate + 2 H(+). Its function is as follows. Allows the formation of correctly charged Asn-tRNA(Asn) or Gln-tRNA(Gln) through the transamidation of misacylated Asp-tRNA(Asn) or Glu-tRNA(Gln) in organisms which lack either or both of asparaginyl-tRNA or glutaminyl-tRNA synthetases. The reaction takes place in the presence of glutamine and ATP through an activated phospho-Asp-tRNA(Asn) or phospho-Glu-tRNA(Gln). This Rhizobium etli (strain CIAT 652) protein is Aspartyl/glutamyl-tRNA(Asn/Gln) amidotransferase subunit C.